The primary structure comprises 113 residues: Putative pterin-4-alpha-carbinolamine dehydratase (113 aa).

It belongs to the pterin-4-alpha-carbinolamine dehydratase family.

The catalysed reaction is (4aS,6R)-4a-hydroxy-L-erythro-5,6,7,8-tetrahydrobiopterin = (6R)-L-erythro-6,7-dihydrobiopterin + H2O. The sequence is that of Putative pterin-4-alpha-carbinolamine dehydratase from Nitrosospira multiformis (strain ATCC 25196 / NCIMB 11849 / C 71).